We begin with the raw amino-acid sequence, 400 residues long: Tryptophan synthase beta chain (400 aa).

An N6-(pyridoxal phosphate)lysine modification is found at Lys-92.

This sequence belongs to the TrpB family. In terms of assembly, tetramer of two alpha and two beta chains. Pyridoxal 5'-phosphate is required as a cofactor.

The catalysed reaction is (1S,2R)-1-C-(indol-3-yl)glycerol 3-phosphate + L-serine = D-glyceraldehyde 3-phosphate + L-tryptophan + H2O. The protein operates within amino-acid biosynthesis; L-tryptophan biosynthesis; L-tryptophan from chorismate: step 5/5. In terms of biological role, the beta subunit is responsible for the synthesis of L-tryptophan from indole and L-serine. This chain is Tryptophan synthase beta chain, found in Leptospira borgpetersenii serovar Hardjo-bovis (strain JB197).